A 203-amino-acid chain; its full sequence is Urease accessory protein UreE (203 aa).

The disordered stretch occupies residues 170 to 203 (EHHGHSHSHSHSHSHDHDHQHGPSCSHGHHHGHR).

This sequence belongs to the UreE family.

It localises to the cytoplasm. Functionally, involved in urease metallocenter assembly. Binds nickel. Probably functions as a nickel donor during metallocenter assembly. This is Urease accessory protein UreE from Burkholderia mallei (strain SAVP1).